We begin with the raw amino-acid sequence, 989 residues long: Voltage-gated delayed rectifier potassium channel KCNH1 (989 aa).

The Cytoplasmic segment spans residues 1-220 (MTMAGGRRGL…LHYCVFKTTW (220 aa)). The PAS domain maps to 14–94 (QNTFLENIVR…QTFENYEMNS (81 aa)). One can recognise a PAC domain in the interval 93–145 (NSFEILMYKKNRTPVWFFVKIAPIRNEQDKVVLFLCTFSDITAFKQPIEDDSC). Positions 151-162 (FARLTRALTSSR) are required for phosphatidylinositol bisphosphate binding. Residues 221–241 (DWIILILTFYTAILVPYNVSF) traverse the membrane as a helical segment. Residues 242–248 (KTRQNNV) lie on the Extracellular side of the membrane. The chain crosses the membrane as a helical span at residues 249 to 269 (AWLVVDSIVDVIFLVDIVLNF). The Cytoplasmic segment spans residues 270-290 (HTTFVGPAGEVISDPKLIRMN). The chain crosses the membrane as a helical span at residues 291–309 (YLKTWFVIDLLSCLPYDVI). At 310–345 (NAFENVDEVSAFMGDPGKIGFADQIPPPLEGRESQG) the chain is on the extracellular side. The helical; Voltage-sensor transmembrane segment at 346–368 (ISSLFSSLKVVRLLRLGRVARKL) threads the bilayer. Residues 369–377 (DHYIEYGAA) are Cytoplasmic-facing. A helical membrane pass occupies residues 378–399 (VLVLLVCVFGLAAHWMACIWYS). Topologically, residues 400–448 (IGDYEIFDEDTKTIRNNSWLYQLAMDIGTPYQFNGSGSGKWEGGPSKNS) are extracellular. N-linked (GlcNAc...) asparagine glycosylation is found at Asn-415 and Asn-433. Residues 449–470 (VYISSLYFTMTSLTSVGFGNIA) constitute an intramembrane region (pore-forming). The short motif at 463 to 468 (SVGFGN) is the Selectivity filter element. The Extracellular segment spans residues 471-477 (PSTDIEK). A helical transmembrane segment spans residues 478–498 (IFAVAIMMIGSLLYATIFGNV). At 499–989 (TTIFQQMYAN…ESERDIFGAS (491 aa)) the chain is on the cytoplasmic side. Residues 673–770 (KRDALQKVLE…LDDLDVEKGN (98 aa)) form a calmodulin-binding region. An interaction with cyclic nucleotide-binding pocket region spans residues 699 to 701 (YNL). Residues 855–879 (KAESMETLPERTKASGEATLKKTDS) are compositionally biased toward basic and acidic residues. 2 disordered regions span residues 855–886 (KAES…GITK) and 962–989 (RSSQ…FGAS). The segment at 924–964 (ATVLEVRHELKEDIKALNAKMTNIEKQLSEILRILTSRRSS) is CAD (involved in subunit assembly). Residues Ser-974, Ser-978, and Ser-981 each carry the phosphoserine modification. Basic and acidic residues predominate over residues 980-989 (ESERDIFGAS).

Belongs to the potassium channel family. H (Eag) (TC 1.A.1.20) subfamily. Kv10.1/KCNH1 sub-subfamily. Homomultimer. The potassium channel is composed of a homo- or heterotetrameric complex of pore-forming alpha subunits that can associate with modulating beta subunits. Heteromultimer with KCNH5/EAG2. Interacts with ALG10B. Interacts with RABEP1. Interacts (via C-terminus) with CTTN. Interacts (via C-terminal cytoplasmic region) with Ca(2+)-bound calmodulin. Interacts with the spider kappa-theraphotoxin-Aa1a and mu/kappa-theraphotoxin-Ap1a. In terms of processing, channel activity is regulated via tyrosine phosphorylation/dephosphorylation by SRC and PTPN6. In terms of tissue distribution, highly expressed in brain and in myoblasts at the onset of fusion, but not in other tissues. Detected in HeLa (cervical carcinoma), SH-SY5Y (neuroblastoma) and MCF-7 (epithelial tumor) cells, but not in normal epithelial cells.

It localises to the cell membrane. Its subcellular location is the nucleus inner membrane. The protein localises to the cell projection. The protein resides in the dendrite. It is found in the axon. It localises to the presynaptic cell membrane. Its subcellular location is the perikaryon. The protein localises to the postsynaptic density membrane. The protein resides in the early endosome membrane. The enzyme catalyses K(+)(in) = K(+)(out). Its activity is regulated as follows. Channel activity is inhibited by interaction with Ca(2+)-bound calmodulin. Interaction of a single pore-forming alpha subunit with a calmodulin chain is sufficient to promote channel closure. Channel activity is not regulated by cyclic nucleotides. Channel activity is inhibited by binding intracellular phosphatidylinositol-3,5-bisphosphate and phosphatidylinositol-4,5-bisphosphate (PIP2), but is not inhibited by phosphatidylinositol 4-phosphate. Inhibited by the spider kappa-theraphotoxin-Aa1a and mu/kappa-theraphotoxin-Ap1a. Functionally, pore-forming (alpha) subunit of a voltage-gated delayed rectifier potassium channel that mediates outward-rectifying potassium currents which, on depolarization, reaches a steady-state level and do not inactivate. The activation kinetics depend on the prepulse potential and external divalent cation concentration. With negative prepulses, the current activation is delayed and slowed down several fold, whereas more positive prepulses speed up activation. The time course of activation is biphasic with a fast and a slowly activating current component. Activates at more positive membrane potentials and exhibit a steeper activation curve. Channel properties are modulated by subunit assembly. Mediates IK(NI) current in myoblasts. Involved in the regulation of cell proliferation and differentiation, in particular adipogenic and osteogenic differentiation in bone marrow-derived mesenchymal stem cells (MSCs). The protein is Voltage-gated delayed rectifier potassium channel KCNH1 of Homo sapiens (Human).